Consider the following 129-residue polypeptide: HTH-type transcriptional regulator GlnR (129 aa).

The region spanning 10–78 is the HTH merR-type domain; it reads LFPIGIVMDL…MAGIKQVLLM (69 aa). A DNA-binding region (H-T-H motif) is located at residues 13-32; that stretch reads IGIVMDLTQLSARQIRYYEE.

As to quaternary structure, homodimer under conditions of nitrogen excess. Monomer under conditions of nitrogen-limited. Interacts with feedback-inhibited GlnA in order to stabilizes GlnR-DNA complex.

With respect to regulation, under conditions of nitrogen excess, the DNA binding activity of GlnR is activated by a transient interaction with feedback-inhibited GlnA. Under conditions of nitrogen-limited, GlnR is autoinhibited by its C-terminal region. In terms of biological role, transcription repressor during nitrogen excess. On the contrary of the MerR members, which require longer DNA sites for high-affinity binding, GlnR requires a DNA sequence of 17 nucleotides as minimal binding site. The protein is HTH-type transcriptional regulator GlnR of Bacillus anthracis.